Here is a 466-residue protein sequence, read N- to C-terminus: Ribulose bisphosphate carboxylase large chain (466 aa).

Lys5 is modified (N6,N6,N6-trimethyllysine). Positions 114 and 164 each coordinate substrate. The active-site Proton acceptor is the Lys166. Lys168 is a binding site for substrate. Lys192, Asp194, and Glu195 together coordinate Mg(2+). Lys192 bears the N6-carboxylysine mark. The active-site Proton acceptor is the His285. Positions 286, 318, and 370 each coordinate substrate.

The protein belongs to the RuBisCO large chain family. Type I subfamily. In terms of assembly, heterohexadecamer of 8 large chains and 8 small chains; disulfide-linked. The disulfide link is formed within the large subunit homodimers. Requires Mg(2+) as cofactor. Post-translationally, the disulfide bond which can form in the large chain dimeric partners within the hexadecamer appears to be associated with oxidative stress and protein turnover.

It is found in the plastid. Its subcellular location is the chloroplast. It carries out the reaction 2 (2R)-3-phosphoglycerate + 2 H(+) = D-ribulose 1,5-bisphosphate + CO2 + H2O. It catalyses the reaction D-ribulose 1,5-bisphosphate + O2 = 2-phosphoglycolate + (2R)-3-phosphoglycerate + 2 H(+). In terms of biological role, ruBisCO catalyzes two reactions: the carboxylation of D-ribulose 1,5-bisphosphate, the primary event in carbon dioxide fixation, as well as the oxidative fragmentation of the pentose substrate in the photorespiration process. Both reactions occur simultaneously and in competition at the same active site. The protein is Ribulose bisphosphate carboxylase large chain of Drosophyllum lusitanicum (Portuguese sundew).